The primary structure comprises 403 residues: Betaine--homocysteine S-methyltransferase 1 (403 aa).

Residues 8 to 311 (KGLLERLDAG…YHTRAIAEEL (304 aa)) form the Hcy-binding domain. The Zn(2+) site is built by Cys214, Cys296, and Cys297.

In terms of assembly, homotetramer. It depends on Zn(2+) as a cofactor.

It localises to the cytoplasm. The catalysed reaction is L-homocysteine + glycine betaine = N,N-dimethylglycine + L-methionine. The protein operates within amine and polyamine degradation; betaine degradation; sarcosine from betaine: step 1/2. It functions in the pathway amino-acid biosynthesis; L-methionine biosynthesis via de novo pathway; L-methionine from L-homocysteine (BhmT route): step 1/1. Involved in the regulation of homocysteine metabolism. Converts betaine and homocysteine to dimethylglycine and methionine, respectively. This reaction is also required for the irreversible oxidation of choline. This Xenopus tropicalis (Western clawed frog) protein is Betaine--homocysteine S-methyltransferase 1 (bhmt).